A 946-amino-acid polypeptide reads, in one-letter code: Bifunctional glutamine synthetase adenylyltransferase/adenylyl-removing enzyme (946 aa).

An adenylyl removase region spans residues 1-440 (MKPLSSPLQQ…VFNELIGDDE (440 aa)). The tract at residues 449 to 946 (SEQWRELWQD…ASWQKWLVEE (498 aa)) is adenylyl transferase.

It belongs to the GlnE family. Requires Mg(2+) as cofactor.

It carries out the reaction [glutamine synthetase]-O(4)-(5'-adenylyl)-L-tyrosine + phosphate = [glutamine synthetase]-L-tyrosine + ADP. It catalyses the reaction [glutamine synthetase]-L-tyrosine + ATP = [glutamine synthetase]-O(4)-(5'-adenylyl)-L-tyrosine + diphosphate. Functionally, involved in the regulation of glutamine synthetase GlnA, a key enzyme in the process to assimilate ammonia. When cellular nitrogen levels are high, the C-terminal adenylyl transferase (AT) inactivates GlnA by covalent transfer of an adenylyl group from ATP to specific tyrosine residue of GlnA, thus reducing its activity. Conversely, when nitrogen levels are low, the N-terminal adenylyl removase (AR) activates GlnA by removing the adenylyl group by phosphorolysis, increasing its activity. The regulatory region of GlnE binds the signal transduction protein PII (GlnB) which indicates the nitrogen status of the cell. This Escherichia coli O6:H1 (strain CFT073 / ATCC 700928 / UPEC) protein is Bifunctional glutamine synthetase adenylyltransferase/adenylyl-removing enzyme.